The following is a 450-amino-acid chain: Glucose-6-phosphate isomerase (450 aa).

The active-site Proton donor is Glu291. Residues His312 and Lys426 contribute to the active site.

It belongs to the GPI family.

Its subcellular location is the cytoplasm. It carries out the reaction alpha-D-glucose 6-phosphate = beta-D-fructose 6-phosphate. It participates in carbohydrate biosynthesis; gluconeogenesis. Its pathway is carbohydrate degradation; glycolysis; D-glyceraldehyde 3-phosphate and glycerone phosphate from D-glucose: step 2/4. In terms of biological role, catalyzes the reversible isomerization of glucose-6-phosphate to fructose-6-phosphate. This chain is Glucose-6-phosphate isomerase, found in Clostridium botulinum (strain Langeland / NCTC 10281 / Type F).